The sequence spans 295 residues: Light-independent protochlorophyllide reductase iron-sulfur ATP-binding protein (295 aa).

ATP contacts are provided by residues 39-44 (GIGKST) and K68. S43 serves as a coordination point for Mg(2+). C124 and C158 together coordinate [4Fe-4S] cluster. Residues 209–210 (NR) and 233–235 (PDL) each bind ATP.

Belongs to the NifH/BchL/ChlL family. In terms of assembly, homodimer. Protochlorophyllide reductase is composed of three subunits; BchL, BchN and BchB. [4Fe-4S] cluster serves as cofactor.

The enzyme catalyses chlorophyllide a + oxidized 2[4Fe-4S]-[ferredoxin] + 2 ADP + 2 phosphate = protochlorophyllide a + reduced 2[4Fe-4S]-[ferredoxin] + 2 ATP + 2 H2O. Its pathway is porphyrin-containing compound metabolism; bacteriochlorophyll biosynthesis (light-independent). In terms of biological role, component of the dark-operative protochlorophyllide reductase (DPOR) that uses Mg-ATP and reduced ferredoxin to reduce ring D of protochlorophyllide (Pchlide) to form chlorophyllide a (Chlide). This reaction is light-independent. The L component serves as a unique electron donor to the NB-component of the complex, and binds Mg-ATP. The chain is Light-independent protochlorophyllide reductase iron-sulfur ATP-binding protein from Rhodospirillum rubrum (strain ATCC 11170 / ATH 1.1.1 / DSM 467 / LMG 4362 / NCIMB 8255 / S1).